Consider the following 276-residue polypeptide: Phosphate import ATP-binding protein PstB (276 aa).

Residues 23 to 271 (VNNKNIVYDT…PSDQRTEDYI (249 aa)) enclose the ABC transporter domain. 62–69 (GPSGCGKS) serves as a coordination point for ATP.

Belongs to the ABC transporter superfamily. Phosphate importer (TC 3.A.1.7) family. In terms of assembly, the complex is composed of two ATP-binding proteins (PstB), two transmembrane proteins (PstC and PstA) and a solute-binding protein (PstS).

The protein localises to the cell membrane. It catalyses the reaction phosphate(out) + ATP + H2O = ADP + 2 phosphate(in) + H(+). Its function is as follows. Part of the ABC transporter complex PstSACB involved in phosphate import. Responsible for energy coupling to the transport system. The chain is Phosphate import ATP-binding protein PstB from Oceanobacillus iheyensis (strain DSM 14371 / CIP 107618 / JCM 11309 / KCTC 3954 / HTE831).